A 423-amino-acid chain; its full sequence is MKVDVLLGLQWGDEGKGKVVDVLTPKYDVVARFQGGPNAGHTLEFEGQKYVLRSIPSGIFQGDKVNIIGNGVVLDPALFKAEAEALEASGHNLKERLHISKKAHLILPTHRILDAAYEAAKGDAKVGTTGKGIGPTYTDKVSRNGVRVGDILHNFEQKYAAAKARHEQILKGLNYEYDLTELEKAWFEGIEYLKQFQLVDSEHEINGLLDNGKSILCEGAQGTMLDIDFGSYPFVTSSNTVCAGACTGLGVAPNKIGDVYGIFKAYCTRVGSGPFPTELFDKTGDQICTLGHEFGSVTGRKRRCGWVDLVALKYSIMVNGVTKLIMMKSDVLDTFETIKACVAYKMNGEEIDYFPYDITDEVEPIYVELPGWQTDMTKMQSEDEFPEEFNAYLSFLEEQLGVQIKIVSVGPDREQTIIRYTEE.

GTP is bound by residues 12 to 18 and 40 to 42; these read GDEGKGK and GHT. D13 serves as the catalytic Proton acceptor. Mg(2+) is bound by residues D13 and G40. IMP is bound by residues 13-16, 38-41, T129, R143, Q221, T236, and R300; these read DEGK and NAGH. The Proton donor role is filled by H41. 296-302 serves as a coordination point for substrate; sequence SVTGRKR. GTP is bound by residues R302, 328 to 330, and 408 to 410; these read KSD and SVG.

It belongs to the adenylosuccinate synthetase family. Homodimer. Requires Mg(2+) as cofactor.

The protein localises to the cytoplasm. The catalysed reaction is IMP + L-aspartate + GTP = N(6)-(1,2-dicarboxyethyl)-AMP + GDP + phosphate + 2 H(+). Its pathway is purine metabolism; AMP biosynthesis via de novo pathway; AMP from IMP: step 1/2. Its function is as follows. Plays an important role in the de novo pathway of purine nucleotide biosynthesis. Catalyzes the first committed step in the biosynthesis of AMP from IMP. This is Adenylosuccinate synthetase from Bacteroides fragilis (strain ATCC 25285 / DSM 2151 / CCUG 4856 / JCM 11019 / LMG 10263 / NCTC 9343 / Onslow / VPI 2553 / EN-2).